A 62-amino-acid polypeptide reads, in one-letter code: Arabinogalactan protein 40 (62 aa).

The N-terminal stretch at 1–22 (MEMKNIFVALFISAVLVSSVSA) is a signal peptide. Pro28, Pro30, and Pro32 each carry 4-hydroxyproline. 3 O-linked (Ara...) hydroxyproline glycosylation sites follow: Pro28, Pro30, and Pro32. A lipid anchor (GPI-anchor amidated serine) is attached at Ser35. The propeptide at 36–62 (SASTVAFPVVGSIVAASLSAFLALLLQ) is removed in mature form.

This sequence belongs to the AG-peptide AGP family. Contains 4-hydroxyproline; hydroxylated on Pro-28, Pro-30 and Pro-32. In terms of processing, O-glycosylated on hydroxyprolines; noncontiguous hydroxylproline residues are glycosylated with arabinogalactan.

It localises to the cell membrane. Its function is as follows. Proteoglycan that seems to be implicated in diverse developmental roles such as differentiation, cell-cell recognition, embryogenesis and programmed cell death. The polypeptide is Arabinogalactan protein 40 (Arabidopsis thaliana (Mouse-ear cress)).